Reading from the N-terminus, the 236-residue chain is Small ribosomal subunit protein uS3 (236 aa).

Residues I39–K107 enclose the KH type-2 domain. Residues P214–S229 show a composition bias toward basic and acidic residues. Residues P214–Q236 are disordered.

The protein belongs to the universal ribosomal protein uS3 family. As to quaternary structure, part of the 30S ribosomal subunit. Forms a tight complex with proteins S10 and S14.

Its function is as follows. Binds the lower part of the 30S subunit head. Binds mRNA in the 70S ribosome, positioning it for translation. The sequence is that of Small ribosomal subunit protein uS3 from Helicobacter hepaticus (strain ATCC 51449 / 3B1).